A 343-amino-acid polypeptide reads, in one-letter code: uncharacterized protein (343 aa).

Residue G33 to S40 participates in ATP binding.

The protein belongs to the archaeal ATPase family.

This is an uncharacterized protein from Methanocaldococcus jannaschii (strain ATCC 43067 / DSM 2661 / JAL-1 / JCM 10045 / NBRC 100440) (Methanococcus jannaschii).